Reading from the N-terminus, the 579-residue chain is Fatty-acid amide hydrolase 1 (579 aa).

The helical transmembrane segment at 9–29 (ALSGLSGVCLACSLLSAAVVL) threads the bilayer. Topologically, residues 30 to 403 (RWTRSQTARG…GDFVDPCLGD (374 aa)) are cytoplasmic. Residue Lys-142 is the Charge relay system of the active site. Residues Met-191, Ser-217, and 238-241 (IGGS) contribute to the substrate site. Catalysis depends on Ser-217, which acts as the Charge relay system. The Acyl-ester intermediate role is filled by Ser-241. Ser-241 bears the Phosphoserine mark. An intramembrane segment occupies 404-433 (LVLVLKLPRWFKKLLSFLLKPLFPRLAAFL). Residues 434 to 579 (NSMCPRSAEK…RLMTPEKRPS (146 aa)) lie on the Cytoplasmic side of the membrane.

It belongs to the amidase family. As to quaternary structure, homodimer.

The protein resides in the endoplasmic reticulum membrane. Its subcellular location is the golgi apparatus membrane. The enzyme catalyses N-(5Z,8Z,11Z,14Z-eicosatetraenoyl)-ethanolamine + H2O = ethanolamine + (5Z,8Z,11Z,14Z)-eicosatetraenoate. It carries out the reaction (9Z)-octadecenamide + H2O = (9Z)-octadecenoate + NH4(+). The catalysed reaction is 2-(5Z,8Z,11Z,14Z-eicosatetraenoyl)-glycerol + H2O = glycerol + (5Z,8Z,11Z,14Z)-eicosatetraenoate + H(+). It catalyses the reaction N-(9Z-hexadecenoyl) ethanolamine + H2O = (9Z)-hexadecenoate + ethanolamine. The enzyme catalyses N-(9Z-octadecenoyl) ethanolamine + H2O = ethanolamine + (9Z)-octadecenoate. It carries out the reaction N-octadecanoyl ethanolamine + H2O = octadecanoate + ethanolamine. The catalysed reaction is N-docosanoyl-ethanolamine + H2O = docosanoate + ethanolamine. It catalyses the reaction N-tetracosanoyl-taurine + H2O = tetracosanoate + taurine. The enzyme catalyses N-(15Z-tetracosenoyl)-ethanolamine + H2O = (15Z)-tetracosenoate + ethanolamine. It carries out the reaction N-(9Z-octadecenoyl)-taurine + H2O = taurine + (9Z)-octadecenoate. The catalysed reaction is N-docosanoyl-taurine + H2O = docosanoate + taurine. It catalyses the reaction N-(15Z-tetracosenoyl)-taurine + H2O = (15Z)-tetracosenoate + taurine. The enzyme catalyses N-tricosanoyl-taurine + H2O = tricosanoate + taurine. It carries out the reaction (9Z,12Z,15Z)-octadecatrienamide + H2O = (9Z,12Z,15Z)-octadecatrienoate + NH4(+). The catalysed reaction is (5Z,8Z,11Z,14Z)-eicosatetraenamide + H2O = (5Z,8Z,11Z,14Z)-eicosatetraenoate + NH4(+). It catalyses the reaction (6Z)-octadecenamide + H2O = (6Z)-octadecenoate + NH4(+). The enzyme catalyses (15Z)-tetracosenamide + H2O = (15Z)-tetracosenoate + NH4(+). It carries out the reaction (8Z,11Z,14Z)-eicosatrienamide + H2O = (8Z,11Z,14Z)-eicosatrienoate + NH4(+). The catalysed reaction is (11Z,14Z,17Z)-eicosatrienamide + H2O = (11Z,14Z,17Z)-eicosatrienoate + NH4(+). It catalyses the reaction (11Z,14Z)-eicosadienamide + H2O = (11Z,14Z)-eicosadienoate + NH4(+). The enzyme catalyses (9Z,12Z)-octadecadienamide + H2O = (9Z,12Z)-octadecadienoate + NH4(+). It carries out the reaction tetradecamide + H2O = tetradecanoate + NH4(+). The catalysed reaction is 1-O-methyl-(5Z,8Z,11Z,14Z)-eicosatetraenoate + H2O = methanol + (5Z,8Z,11Z,14Z)-eicosatetraenoate + H(+). It catalyses the reaction (11Z)-eicosenamide + H2O = (11Z)-eicosenoate + NH4(+). The enzyme catalyses (9Z)-octadecenoate + glycine = N-(9Z-octadecenoyl)glycine + H2O. It carries out the reaction N-(5Z,8Z,11Z,14Z)-eicosatetraenoyl-glycine + H2O = (5Z,8Z,11Z,14Z)-eicosatetraenoate + glycine. The catalysed reaction is N-(5Z,8Z,11Z,14Z-eicosatetraenoyl)-L-serine + H2O = (5Z,8Z,11Z,14Z)-eicosatetraenoate + L-serine. Inhibited the trifluoromethyl compound PF-3845. Functionally, catalyzes the hydrolysis of endogenous amidated lipids like the endocannabinoid anandamide (N-(5Z,8Z,11Z,14Z-eicosatetraenoyl)-ethanolamine), as well as other fatty amides such as the taurine-conjugated fatty acids (a structural class of central nervous system (CNS) metabolites), to their corresponding fatty acids, thereby regulating the signaling functions of these molecules. FAAH cooperates with PM20D1 in the hydrolysis of amino acid-conjugated fatty acids such as N-fatty acyl glycine and N-fatty acyl-L-serine, thereby acting as a physiological regulator of specific subsets of intracellular, but not of extracellular, N-fatty acyl amino acids. It can also catalyze the hydrolysis of the endocannabinoid 2-arachidonoylglycerol (2-(5Z,8Z,11Z,14Z-eicosatetraenoyl)-glycerol). In Mus musculus (Mouse), this protein is Fatty-acid amide hydrolase 1 (Faah).